A 333-amino-acid chain; its full sequence is Delta(9)-fatty-acid desaturase fat-5 (333 aa).

Transmembrane regions (helical) follow at residues 42-62, 66-86, 187-207, and 210-230; these read NVAL…QLVF, WATV…VTGG, LPLV…VLWG, and AFIA…HATW.

It belongs to the fatty acid desaturase type 1 family. As to expression, expressed in the intestine in adult worms and in all four larval stages. Additional expression in the pharynx and tail cells after hatching and throughout the lifespan.

It is found in the membrane. The catalysed reaction is hexadecanoyl-CoA + 2 Fe(II)-[cytochrome b5] + O2 + 2 H(+) = (9Z)-hexadecenoyl-CoA + 2 Fe(III)-[cytochrome b5] + 2 H2O. The enzyme catalyses tetradecanoyl-CoA + 2 Fe(II)-[cytochrome b5] + O2 + 2 H(+) = (9Z)-tetradecenoyl-CoA + 2 Fe(III)-[cytochrome b5] + 2 H2O. It carries out the reaction heptadecanoyl-CoA + 2 Fe(II)-[cytochrome b5] + O2 + 2 H(+) = (9Z)-heptadecenoyl-CoA + 2 Fe(III)-[cytochrome b5] + 2 H2O. It catalyses the reaction pentadecanoyl-CoA + 2 Fe(II)-[cytochrome b5] + O2 + 2 H(+) = (9Z)-pentadecenoyl-CoA + 2 Fe(III)-[cytochrome b5] + 2 H2O. Its pathway is lipid metabolism; monounsaturated fatty acid biosynthesis. In terms of biological role, delta(9)-fatty acid desaturase that acts preferentially on palmitoyl-CoA (hexadecanoyl-CoA) producing the monounsaturated palmitoleoyl-CoA ((9Z)-hexadecenoyl-CoA), which can be elongated to (11Z)-octadecenoyl-CoA (the most abundant monounsaturated fatty acid in Caenorhabditis elegans phospholipids and triacylglycerols). Also acts on pentadecanoyl-CoA, heptadecanoyl-CoA and myristoyl-CoA (tetradecanoyl-CoA), the monounsaturated fatty acids (MUFAs) produced are further used as substrates to synthesize polyunsaturated fatty acids (PUFAs) by several other desaturases and elongases. Unlike plants, Caenorhabditis elegans desaturases seem to use fatty acyl-CoAs as substrates. This chain is Delta(9)-fatty-acid desaturase fat-5 (fat-5), found in Caenorhabditis elegans.